The sequence spans 317 residues: Transaldolase (317 aa).

The active-site Schiff-base intermediate with substrate is the lysine 132.

The protein belongs to the transaldolase family. Type 1 subfamily. In terms of assembly, homodimer.

The protein resides in the cytoplasm. The enzyme catalyses D-sedoheptulose 7-phosphate + D-glyceraldehyde 3-phosphate = D-erythrose 4-phosphate + beta-D-fructose 6-phosphate. Its pathway is carbohydrate degradation; pentose phosphate pathway; D-glyceraldehyde 3-phosphate and beta-D-fructose 6-phosphate from D-ribose 5-phosphate and D-xylulose 5-phosphate (non-oxidative stage): step 2/3. Transaldolase is important for the balance of metabolites in the pentose-phosphate pathway. In Histophilus somni (strain 129Pt) (Haemophilus somnus), this protein is Transaldolase.